We begin with the raw amino-acid sequence, 64 residues long: Prokaryotic ubiquitin-like protein Pup (64 aa).

2 stretches are compositionally biased toward basic and acidic residues: residues 1-11 (MAQEQTKRTGG) and 25-34 (GQERREKLAE). The segment at 1–38 (MAQEQTKRTGGGDEDEGSAGPEAAGQERREKLAEDTDD) is disordered. The tract at residues 21–58 (PEAAGQERREKLAEDTDDLLDEIDDVLEENAEDFVRAY) is ARC ATPase binding. The stretch at 24 to 52 (AGQERREKLAEDTDDLLDEIDDVLEENAE) forms a coiled coil. Glutamine 64 is subject to Deamidated glutamine. Glutamine 64 participates in a covalent cross-link: Isoglutamyl lysine isopeptide (Gln-Lys) (interchain with K-? in acceptor proteins).

This sequence belongs to the prokaryotic ubiquitin-like protein family. As to quaternary structure, strongly interacts with the proteasome-associated ATPase ARC through a hydrophobic interface; the interacting region of Pup lies in its C-terminal half. There is one Pup binding site per ARC hexamer ring. Post-translationally, is modified by deamidation of its C-terminal glutamine to glutamate by the deamidase Dop, a prerequisite to the subsequent pupylation process.

It functions in the pathway protein degradation; proteasomal Pup-dependent pathway. Its function is as follows. Protein modifier that is covalently attached to lysine residues of substrate proteins, thereby targeting them for proteasomal degradation. The tagging system is termed pupylation. This chain is Prokaryotic ubiquitin-like protein Pup, found in Nocardia farcinica (strain IFM 10152).